Consider the following 216-residue polypeptide: Ras-related protein Rab-2B (216 aa).

GTP contacts are provided by Gly-16, Val-17, Gly-18, Lys-19, Ser-20, Cys-21, and Thr-38. Mg(2+) is bound at residue Ser-20. The Switch 1 signature appears at 37 to 42 (LTIGVE). Thr-38 and Asp-61 together coordinate Mg(2+). A Switch 2 motif is present at residues 63-72 (AGQESFRSIT). Residues Gly-64, Asn-119, Lys-120, Asp-122, Ala-150, and Lys-151 each coordinate GTP. The span at 189-207 (PQQSITSSVGPCSPQQNVS) shows a compositional bias: polar residues. The disordered stretch occupies residues 189-216 (PQQSITSSVGPCSPQQNVSDIGPDSGCC). S-geranylgeranyl cysteine attachment occurs at residues Cys-215 and Cys-216.

The protein belongs to the small GTPase superfamily. Rab family. As to quaternary structure, interacts (in GTP-bound form) with GARIN4 (via N-terminus). Interacts (in GTP-bound form) with GARIN5A. Interacts (in GTP-bound form) with GARIN1B. Interacts with VPS39 and VPS41. It depends on Mg(2+) as a cofactor.

The protein localises to the cell membrane. It is found in the endoplasmic reticulum membrane. It localises to the golgi apparatus membrane. Its subcellular location is the cytoplasmic vesicle. The protein resides in the secretory vesicle. The protein localises to the acrosome. It is found in the autophagosome membrane. It catalyses the reaction GTP + H2O = GDP + phosphate + H(+). Regulated by guanine nucleotide exchange factors (GEFs) which promote the exchange of bound GDP for free GTP, GTPase activating proteins (GAPs) which increase the GTP hydrolysis activity, and GDP dissociation inhibitors (GDIs) which inhibit the dissociation of the nucleotide from the GTPase. Its function is as follows. The small GTPases Rab are key regulators of intracellular membrane trafficking, from the formation of transport vesicles to their fusion with membranes. Rabs cycle between active GTP-bound and inactive GDP-bound states. In their active state, drive transport of vesicular carriers from donor organelles to acceptor organelles to regulate the membrane traffic that maintains organelle identity and morphology. Regulates the compacted morphology of the Golgi. Promotes cytosolic DNA-induced innate immune responses. Regulates IFN responses against DNA viruses by regulating the CGAS-STING signaling axis. Together with RAB2A redundantly required for efficient autophagic flux. This is Ras-related protein Rab-2B (Rab2b) from Mus musculus (Mouse).